The chain runs to 508 residues: MELYLNMLSFWYILLATSFFGPSQAVYQAPLSVDESQKVTIEEGFQIFTSKHSPQHSIRIKKQDGSICDAHSAQYTGWLDIGPKHLFFWYFESQNDPENDPLTLWMTGGPGYSSMLGMLEEVGPCLVNEYGNGTKYNPWGWSKKSSMLFVDQPVGVGFSYGDEGHDIPNDSYLAAVDMHRFLQLFISEVFPNKLNSPFHISGESYGGHYIPYLGAQIVRQNKLYPNEPQVQLKSCLIGNGCMSHMHTTFGYWETLCTTNPGVEKPIFNETRCDIMAKNMPRCMKVAEVCRRNPDPAICLSAQSVCDEGITGLYNKESDVKGGRNRFDITTPCQADDICYVQGLHLQNYLNTKLVWDALSPPKEVKEYKFASKNVEHAFGLTSDSMVPSTEEVEFLLSNQIHIMSYQGNLDLACNTAGNLKWMHDIPWKGQAELSSKALVPWKSVLASTGKNETVGRMKEVKIRVTDSATFATRYAFVTVDNAGHMVPQDRPDVAFDLMNRWISGETFV.

Residues 1 to 25 form the signal peptide; that stretch reads MELYLNMLSFWYILLATSFFGPSQA. Asn-132 and Asn-169 each carry an N-linked (GlcNAc...) asparagine glycan. Residue Ser-204 is part of the active site. Residue Asn-268 is glycosylated (N-linked (GlcNAc...) asparagine). Cystine bridges form between Cys-282–Cys-305, Cys-289–Cys-298, and Cys-332–Cys-338. The active site involves Asp-410. Cys-413 contacts substrate. N-linked (GlcNAc...) asparagine glycosylation occurs at Asn-451. Residue His-484 is part of the active site. Met-485 serves as a coordination point for substrate.

The protein belongs to the peptidase S10 family.

Its subcellular location is the secreted. It carries out the reaction Release of a C-terminal amino acid with broad specificity.. Involved in degradation of small peptides. This Arthroderma benhamiae (strain ATCC MYA-4681 / CBS 112371) (Trichophyton mentagrophytes) protein is Carboxypeptidase Y homolog ARB_05721.